The primary structure comprises 81 residues: Putative membrane protein insertion efficiency factor (81 aa).

Residues 61–81 (NDGGFDPVPPAPSSRTSSIAE) form a disordered region.

The protein belongs to the UPF0161 family.

The protein localises to the cell inner membrane. Its function is as follows. Could be involved in insertion of integral membrane proteins into the membrane. This is Putative membrane protein insertion efficiency factor from Pseudomonas entomophila (strain L48).